A 435-amino-acid chain; its full sequence is Putative acid phosphatase F26C11.1 (435 aa).

Residue histidine 38 is the Nucleophile of the active site. Aspartate 317 (proton donor) is an active-site residue. A disulfide bridge connects residues cysteine 382 and cysteine 388.

This sequence belongs to the histidine acid phosphatase family.

The catalysed reaction is a phosphate monoester + H2O = an alcohol + phosphate. This chain is Putative acid phosphatase F26C11.1, found in Caenorhabditis elegans.